Consider the following 242-residue polypeptide: ATP synthase subunit a (242 aa).

6 consecutive transmembrane segments (helical) span residues 31 to 51 (IYMLLASILALTYFYLAFYNW), 84 to 104 (FIPLFFSLFIFILFCNLLGMT), 114 to 134 (IIVTFALAILVFLTITIVGFV), 140 to 160 (FLTLFLPHGTPLWLAPLMIVI), 189 to 209 (VIASFTISLMIYLKFISIPLM), and 210 to 230 (VILIGFEIFIAVLQAYIFTIL).

The protein belongs to the ATPase A chain family. As to quaternary structure, F-type ATPases have 2 components, CF(1) - the catalytic core - and CF(0) - the membrane proton channel. CF(1) has five subunits: alpha(3), beta(3), gamma(1), delta(1), epsilon(1). CF(0) has three main subunits: a(1), b(2) and c(9-12). The alpha and beta chains form an alternating ring which encloses part of the gamma chain. CF(1) is attached to CF(0) by a central stalk formed by the gamma and epsilon chains, while a peripheral stalk is formed by the delta and b chains.

It is found in the cell inner membrane. Functionally, key component of the proton channel; it plays a direct role in the translocation of protons across the membrane. The polypeptide is ATP synthase subunit a (Rickettsia canadensis (strain McKiel)).